Reading from the N-terminus, the 232-residue chain is Orotidine 5'-phosphate decarboxylase (232 aa).

Substrate is bound by residues Asp-13, Lys-35, 62 to 71 (DLKFHDIPNT), Thr-122, Arg-182, Gln-191, Gly-211, and Arg-212. Lys-64 functions as the Proton donor in the catalytic mechanism.

Belongs to the OMP decarboxylase family. Type 1 subfamily. As to quaternary structure, homodimer.

It carries out the reaction orotidine 5'-phosphate + H(+) = UMP + CO2. It functions in the pathway pyrimidine metabolism; UMP biosynthesis via de novo pathway; UMP from orotate: step 2/2. Catalyzes the decarboxylation of orotidine 5'-monophosphate (OMP) to uridine 5'-monophosphate (UMP). The sequence is that of Orotidine 5'-phosphate decarboxylase from Pseudomonas fluorescens (strain Pf0-1).